A 171-amino-acid polypeptide reads, in one-letter code: NADH-quinone oxidoreductase subunit I (171 aa).

4Fe-4S ferredoxin-type domains lie at 63 to 92 (RRYE…IESD) and 102 to 131 (TRYD…ETQI). The [4Fe-4S] cluster site is built by C72, C75, C78, C82, C111, C114, C117, and C121.

This sequence belongs to the complex I 23 kDa subunit family. In terms of assembly, NDH-1 is composed of 14 different subunits. Subunits NuoA, H, J, K, L, M, N constitute the membrane sector of the complex. [4Fe-4S] cluster is required as a cofactor.

It is found in the cell inner membrane. It catalyses the reaction a quinone + NADH + 5 H(+)(in) = a quinol + NAD(+) + 4 H(+)(out). NDH-1 shuttles electrons from NADH, via FMN and iron-sulfur (Fe-S) centers, to quinones in the respiratory chain. The immediate electron acceptor for the enzyme in this species is believed to be ubiquinone. Couples the redox reaction to proton translocation (for every two electrons transferred, four hydrogen ions are translocated across the cytoplasmic membrane), and thus conserves the redox energy in a proton gradient. The chain is NADH-quinone oxidoreductase subunit I from Paracidovorax citrulli (strain AAC00-1) (Acidovorax citrulli).